A 211-amino-acid chain; its full sequence is MRHYTGIDQLINSFDQALRSLVPGATAAQRQNPAETVEAKLGVEDARHVAGLMRVNHSGEVCAQALYHGQALTAKLPNVRREMQQAAIEEQDHLAWCEDRLKELNSHTSLLNPIWYGLSYGMGALAGIAGDKYSLGFVAETERQVSLHLQDHLNQLPAQDERSRKILEQMNEDELHHRHTALEAGGVELPYAVKITMTAISKLMTKTSYYL.

6 residues coordinate Fe cation: Glu60, Glu90, His93, Glu142, Glu174, and His177.

It belongs to the COQ7 family. It depends on Fe cation as a cofactor.

It localises to the cell membrane. The enzyme catalyses a 5-methoxy-2-methyl-3-(all-trans-polyprenyl)benzene-1,4-diol + AH2 + O2 = a 3-demethylubiquinol + A + H2O. It participates in cofactor biosynthesis; ubiquinone biosynthesis. Its function is as follows. Catalyzes the hydroxylation of 2-nonaprenyl-3-methyl-6-methoxy-1,4-benzoquinol during ubiquinone biosynthesis. The protein is 3-demethoxyubiquinol 3-hydroxylase of Acinetobacter baumannii (strain AB307-0294).